We begin with the raw amino-acid sequence, 327 residues long: MSHVDTLLAEGLAAIAAVQDLNELEQVKARYLGKTGQITELLKQLGKLPPEEKKAAGATINVAKQQFEAAHNARRDALNAARLEAQLAAEALDVTLPGRGAGVGGLHPVTLTLERIASLFRSMGFEVADGPEIEDDFHNFQALNIPADHPARAMQDTFYVEGGNVLRTHTSPIQVRHMLANQPPIKIIAPGRVYRVDSDATHSPMFHQMEGLWVDDGVSFADLKATLTDFLRRFFERDDLQVRFRPSFFPFTEPSAEIDVLGKNGWLEVGGCGMVHPNVLRNVNIDPERYTGFAFGIGLDRFAMLRYGVTDLRLFFENDLSFLKQFN.

Glu-253 lines the Mg(2+) pocket.

The protein belongs to the class-II aminoacyl-tRNA synthetase family. Phe-tRNA synthetase alpha subunit type 1 subfamily. As to quaternary structure, tetramer of two alpha and two beta subunits. The cofactor is Mg(2+).

It localises to the cytoplasm. It carries out the reaction tRNA(Phe) + L-phenylalanine + ATP = L-phenylalanyl-tRNA(Phe) + AMP + diphosphate + H(+). This is Phenylalanine--tRNA ligase alpha subunit from Laribacter hongkongensis (strain HLHK9).